Reading from the N-terminus, the 431-residue chain is Glutamate-1-semialdehyde 2,1-aminomutase (431 aa).

Lysine 269 carries the post-translational modification N6-(pyridoxal phosphate)lysine.

This sequence belongs to the class-III pyridoxal-phosphate-dependent aminotransferase family. HemL subfamily. Homodimer. The cofactor is pyridoxal 5'-phosphate.

It is found in the cytoplasm. The catalysed reaction is (S)-4-amino-5-oxopentanoate = 5-aminolevulinate. Its pathway is porphyrin-containing compound metabolism; protoporphyrin-IX biosynthesis; 5-aminolevulinate from L-glutamyl-tRNA(Glu): step 2/2. It functions in the pathway porphyrin-containing compound metabolism; chlorophyll biosynthesis. In Chlorobium luteolum (strain DSM 273 / BCRC 81028 / 2530) (Pelodictyon luteolum), this protein is Glutamate-1-semialdehyde 2,1-aminomutase.